Here is a 161-residue protein sequence, read N- to C-terminus: Arachidonate 5-lipoxygenase-activating protein (161 aa).

Residues 1 to 8 (MDQEAVGN) lie on the Lumenal side of the membrane. Residues 9–30 (IVLLAIVTLISVVQNGFFAHKV) form a helical membrane-spanning segment. Residues 31 to 52 (EHESKTHNGRSFQRTGTLAFER) lie on the Cytoplasmic side of the membrane. Residues 53–77 (VYTANQNCVDAYPTFLVMLWSAGLL) form a helical membrane-spanning segment. Residues 78 to 80 (CSQ) lie on the Lumenal side of the membrane. Residues 81–102 (VPAAFAGLMYLFVRQKYFVGYL) form a helical membrane-spanning segment. Over 103-107 (GERTQ) the chain is Cytoplasmic. The stretch at 108 to 115 (STPGYIFG) is an intramembrane region. Residues 116–128 (KRIILFLFAMSLA) traverse the membrane as a helical segment. Over 129–161 (GILNYFFIALFGSDFENYIKTVTTTISPLLLIP) the chain is Lumenal.

The protein belongs to the MAPEG family. As to quaternary structure, homotrimer. Interacts with LTC4S and ALOX5.

Its subcellular location is the nucleus membrane. The protein localises to the endoplasmic reticulum membrane. Functionally, required for leukotriene biosynthesis by ALOX5 (5-lipoxygenase). Anchors ALOX5 to the membrane. Binds arachidonic acid, and could play an essential role in the transfer of arachidonic acid to ALOX5. Binds to MK-886, a compound that blocks the biosynthesis of leukotrienes. The chain is Arachidonate 5-lipoxygenase-activating protein (ALOX5AP) from Bos taurus (Bovine).